Here is a 92-residue protein sequence, read N- to C-terminus: Phosphoribosyl-ATP pyrophosphatase (92 aa).

The protein belongs to the PRA-PH family.

Its subcellular location is the cytoplasm. It carries out the reaction 1-(5-phospho-beta-D-ribosyl)-ATP + H2O = 1-(5-phospho-beta-D-ribosyl)-5'-AMP + diphosphate + H(+). Its pathway is amino-acid biosynthesis; L-histidine biosynthesis; L-histidine from 5-phospho-alpha-D-ribose 1-diphosphate: step 2/9. The protein is Phosphoribosyl-ATP pyrophosphatase of Leptospira interrogans serogroup Icterohaemorrhagiae serovar copenhageni (strain Fiocruz L1-130).